Reading from the N-terminus, the 202-residue chain is Ribosomal RNA small subunit methyltransferase G (202 aa).

S-adenosyl-L-methionine-binding positions include Gly-75, Phe-80, 125–126 (VQ), and Arg-139.

This sequence belongs to the methyltransferase superfamily. RNA methyltransferase RsmG family.

The protein localises to the cytoplasm. Its function is as follows. Specifically methylates the N7 position of a guanine in 16S rRNA. The sequence is that of Ribosomal RNA small subunit methyltransferase G from Mesomycoplasma hyopneumoniae (strain 232) (Mycoplasma hyopneumoniae).